Consider the following 231-residue polypeptide: L-ribulose-5-phosphate 4-epimerase (231 aa).

Residues 27-28 (GN), 44-45 (SG), and 74-75 (SS) contribute to the substrate site. 3 residues coordinate Zn(2+): D76, H95, and H97. The Proton donor/acceptor role is filled by D120. Zn(2+) is bound at residue H171. Y229 acts as the Proton donor/acceptor in catalysis.

The protein belongs to the aldolase class II family. AraD/FucA subfamily. As to quaternary structure, homotetramer. Zn(2+) is required as a cofactor.

The enzyme catalyses L-ribulose 5-phosphate = D-xylulose 5-phosphate. It functions in the pathway carbohydrate degradation; L-arabinose degradation via L-ribulose; D-xylulose 5-phosphate from L-arabinose (bacterial route): step 3/3. In terms of biological role, involved in the degradation of L-arabinose. Catalyzes the interconversion of L-ribulose 5-phosphate (LRu5P) and D-xylulose 5-phosphate (D-Xu5P) via a retroaldol/aldol mechanism (carbon-carbon bond cleavage analogous to a class II aldolase reaction). In Salmonella typhimurium (strain LT2 / SGSC1412 / ATCC 700720), this protein is L-ribulose-5-phosphate 4-epimerase.